Reading from the N-terminus, the 159-residue chain is Phosphopantetheine adenylyltransferase (159 aa).

Ser-9 serves as a coordination point for substrate. Residues 9 to 10 (SF) and His-17 contribute to the ATP site. Substrate-binding residues include Lys-41, Leu-73, and Lys-87. Residues 88–90 (GLR), Glu-98, and 123–129 (YGYLSSS) contribute to the ATP site.

It belongs to the bacterial CoaD family. Homohexamer. The cofactor is Mg(2+).

It localises to the cytoplasm. It catalyses the reaction (R)-4'-phosphopantetheine + ATP + H(+) = 3'-dephospho-CoA + diphosphate. It participates in cofactor biosynthesis; coenzyme A biosynthesis; CoA from (R)-pantothenate: step 4/5. Reversibly transfers an adenylyl group from ATP to 4'-phosphopantetheine, yielding dephospho-CoA (dPCoA) and pyrophosphate. The protein is Phosphopantetheine adenylyltransferase of Thermoanaerobacter pseudethanolicus (strain ATCC 33223 / 39E) (Clostridium thermohydrosulfuricum).